Consider the following 231-residue polypeptide: Ion-translocating oxidoreductase complex subunit E (231 aa).

The next 7 membrane-spanning stretches (helical) occupy residues 18–38, 39–59, 69–89, 93–113, 127–147, 157–177, and 182–202; these read GLVQ…ITNA, LGLG…VSLV, IPVF…LINA, NLYL…VIIG, SAFD…VLGA, LFGG…IHVW, and PFLL…LIAL.

This sequence belongs to the NqrDE/RnfAE family. In terms of assembly, the complex is composed of six subunits: RnfA, RnfB, RnfC, RnfD, RnfE and RnfG.

It localises to the cell inner membrane. Part of a membrane-bound complex that couples electron transfer with translocation of ions across the membrane. The protein is Ion-translocating oxidoreductase complex subunit E of Shewanella frigidimarina (strain NCIMB 400).